A 541-amino-acid polypeptide reads, in one-letter code: Chaperonin GroEL 2 (541 aa).

ATP contacts are provided by residues 29–32 (TLGP), 86–90 (DGTTT), Gly-413, 476–478 (NAA), and Asp-492.

It belongs to the chaperonin (HSP60) family. As to quaternary structure, forms a cylinder of 14 subunits composed of two heptameric rings stacked back-to-back. Interacts with the co-chaperonin GroES.

The protein localises to the secreted. It is found in the capsule. The protein resides in the cell surface. Its subcellular location is the cell wall. The enzyme catalyses ATP + H2O + a folded polypeptide = ADP + phosphate + an unfolded polypeptide.. Together with its co-chaperonin GroES, plays an essential role in assisting protein folding. The GroEL-GroES system forms a nano-cage that allows encapsulation of the non-native substrate proteins and provides a physical environment optimized to promote and accelerate protein folding. In Mycobacterium ulcerans (strain Agy99), this protein is Chaperonin GroEL 2.